A 276-amino-acid chain; its full sequence is Probable endonuclease 4 (276 aa).

Residues His66, His106, Glu141, Asp175, His178, His210, Asp223, His225, and Glu255 each contribute to the Zn(2+) site.

It belongs to the AP endonuclease 2 family. Zn(2+) is required as a cofactor.

The enzyme catalyses Endonucleolytic cleavage to 5'-phosphooligonucleotide end-products.. Its function is as follows. Endonuclease IV plays a role in DNA repair. It cleaves phosphodiester bonds at apurinic or apyrimidinic (AP) sites, generating a 3'-hydroxyl group and a 5'-terminal sugar phosphate. The protein is Probable endonuclease 4 of Heliobacterium modesticaldum (strain ATCC 51547 / Ice1).